A 115-amino-acid chain; its full sequence is NAD(P)H-quinone oxidoreductase subunit M (115 aa).

The protein belongs to the complex I NdhM subunit family. As to quaternary structure, NDH-1 can be composed of about 15 different subunits; different subcomplexes with different compositions have been identified which probably have different functions.

It localises to the cellular thylakoid membrane. The enzyme catalyses a plastoquinone + NADH + (n+1) H(+)(in) = a plastoquinol + NAD(+) + n H(+)(out). The catalysed reaction is a plastoquinone + NADPH + (n+1) H(+)(in) = a plastoquinol + NADP(+) + n H(+)(out). Functionally, NDH-1 shuttles electrons from an unknown electron donor, via FMN and iron-sulfur (Fe-S) centers, to quinones in the respiratory and/or the photosynthetic chain. The immediate electron acceptor for the enzyme in this species is believed to be plastoquinone. Couples the redox reaction to proton translocation, and thus conserves the redox energy in a proton gradient. Cyanobacterial NDH-1 also plays a role in inorganic carbon-concentration. The chain is NAD(P)H-quinone oxidoreductase subunit M from Prochlorococcus marinus (strain MIT 9301).